The sequence spans 38 residues: Potassium channel toxin alpha-KTx 2.3 (38 aa).

Cystine bridges form between Cys7–Cys29, Cys13–Cys34, and Cys17–Cys36.

It belongs to the short scorpion toxin superfamily. Potassium channel inhibitor family. Alpha-KTx 02 subfamily. Expressed by the venom gland.

It is found in the secreted. In terms of biological role, inhibitor of voltage-gated potassium channels (Kv). It is capable of displacing the binding of radio-labeled noxiustoxin (AC P08815) to rat brain synaptosomes with high affinity (about 100 pM). It is also capable of inhibiting transient potassium-currents (resembling I(A)-type currents), in cultured rat cerebellar granule cells. About 50% of the peak currents are reduced by application of a 1.5 uM solution of this toxin. The chain is Potassium channel toxin alpha-KTx 2.3 from Centruroides limpidus (Mexican scorpion).